We begin with the raw amino-acid sequence, 432 residues long: Argininosuccinate lyase (432 aa).

This sequence belongs to the lyase 1 family. Argininosuccinate lyase subfamily.

The protein resides in the cytoplasm. The enzyme catalyses 2-(N(omega)-L-arginino)succinate = fumarate + L-arginine. The protein operates within amino-acid biosynthesis; L-arginine biosynthesis; L-arginine from L-ornithine and carbamoyl phosphate: step 3/3. The sequence is that of Argininosuccinate lyase from Xanthomonas euvesicatoria pv. vesicatoria (strain 85-10) (Xanthomonas campestris pv. vesicatoria).